Here is a 330-residue protein sequence, read N- to C-terminus: ADP-L-glycero-D-manno-heptose-6-epimerase (330 aa).

NADP(+) contacts are provided by residues 11–12 (FI), 32–33 (DD), Gln39, Gln54, 75–79 (QGACA), and Asn92. The active-site Proton acceptor is the Tyr139. Lys143 is a binding site for NADP(+). A substrate-binding site is contributed by Asn168. Val169 and Lys177 together coordinate NADP(+). The active-site Proton acceptor is Lys177. Substrate-binding positions include Arg179, His186, 200–203 (FGEH), Arg213, and Tyr292.

This sequence belongs to the NAD(P)-dependent epimerase/dehydratase family. HldD subfamily. In terms of assembly, homopentamer. It depends on NADP(+) as a cofactor.

The enzyme catalyses ADP-D-glycero-beta-D-manno-heptose = ADP-L-glycero-beta-D-manno-heptose. It functions in the pathway nucleotide-sugar biosynthesis; ADP-L-glycero-beta-D-manno-heptose biosynthesis; ADP-L-glycero-beta-D-manno-heptose from D-glycero-beta-D-manno-heptose 7-phosphate: step 4/4. The protein operates within bacterial outer membrane biogenesis; LPS core biosynthesis. Catalyzes the interconversion between ADP-D-glycero-beta-D-manno-heptose and ADP-L-glycero-beta-D-manno-heptose via an epimerization at carbon 6 of the heptose. The protein is ADP-L-glycero-D-manno-heptose-6-epimerase of Pseudomonas aeruginosa (strain ATCC 15692 / DSM 22644 / CIP 104116 / JCM 14847 / LMG 12228 / 1C / PRS 101 / PAO1).